The primary structure comprises 160 residues: 3-dehydroquinate dehydratase (160 aa).

Catalysis depends on Tyr-22, which acts as the Proton acceptor. 3 residues coordinate substrate: Asn-73, His-79, and Asp-86. His-99 serves as the catalytic Proton donor. Residues 100 to 101 and Arg-110 contribute to the substrate site; that span reads IS.

It belongs to the type-II 3-dehydroquinase family. As to quaternary structure, homododecamer.

The catalysed reaction is 3-dehydroquinate = 3-dehydroshikimate + H2O. It functions in the pathway metabolic intermediate biosynthesis; chorismate biosynthesis; chorismate from D-erythrose 4-phosphate and phosphoenolpyruvate: step 3/7. Catalyzes a trans-dehydration via an enolate intermediate. This Sulfurimonas denitrificans (strain ATCC 33889 / DSM 1251) (Thiomicrospira denitrificans (strain ATCC 33889 / DSM 1251)) protein is 3-dehydroquinate dehydratase.